The chain runs to 123 residues: MALKIRLARGGSKKRPYYHVVLADARSPRDGRFLENLGSWNPMLAKDDEKRVQLNAERIKHWLDNGAQPTDRVLRFLNEAGVAKREAKNNPIKAKPGKRAQERAAEKAQKAADAAAAAADAAE.

Positions 87-123 are disordered; the sequence is AKNNPIKAKPGKRAQERAAEKAQKAADAAAAAADAAE. Positions 99–110 are enriched in basic and acidic residues; that stretch reads RAQERAAEKAQK. Over residues 111–123 the composition is skewed to low complexity; it reads AADAAAAAADAAE.

Belongs to the bacterial ribosomal protein bS16 family.

The protein is Small ribosomal subunit protein bS16 of Rhizobium etli (strain CIAT 652).